Here is a 486-residue protein sequence, read N- to C-terminus: Endoglucanase 16 (486 aa).

The signal sequence occupies residues 1–30 (MANYKGRGNVMIRSMLLGLYGIINIVCVNG). N29 carries an N-linked (GlcNAc...) asparagine glycan. Catalysis depends on D87, which acts as the Nucleophile. Active-site residues include H407, D458, and E467.

Belongs to the glycosyl hydrolase 9 (cellulase E) family.

It is found in the secreted. It carries out the reaction Endohydrolysis of (1-&gt;4)-beta-D-glucosidic linkages in cellulose, lichenin and cereal beta-D-glucans.. The chain is Endoglucanase 16 from Arabidopsis thaliana (Mouse-ear cress).